Consider the following 409-residue polypeptide: Transcription termination factor 3, mitochondrial (409 aa).

Residues 1–64 (MALLAQQLSR…KTDRALFSWS (64 aa)) constitute a mitochondrion transit peptide. The segment at 74 to 93 (RKSSTNSTLLPSVSEQPEKI) is disordered.

This sequence belongs to the mTERF family.

The protein resides in the mitochondrion. Its function is as follows. Binds promoter DNA and regulates initiation of transcription. Required for normal mitochondrial transcription and translation, and for normal assembly of mitochondrial respiratory complexes. Required for normal mitochondrial function. Maintains 16S rRNA levels and functions in mitochondrial ribosome assembly by regulating the biogenesis of the 39S ribosomal subunit. The polypeptide is Transcription termination factor 3, mitochondrial (Mterf3) (Rattus norvegicus (Rat)).